The primary structure comprises 457 residues: Peptidyl-prolyl cis-trans isomerase FKBP5 (457 aa).

An N-acetylmethionine modification is found at Met-1. The segment at 1–26 is disordered; sequence MTTDEGAKNSRGNPAATVAEQGEDVT. Lys-28 is subject to N6-acetyllysine. PPIase FKBP-type domains are found at residues 50–138 and 165–251; these read GDRV…LDFK and GARV…KSFE. 3 TPR repeats span residues 268–301, 317–350, and 351–384; these read AAIV…LEME, LAAF…DSAN, and EKGL…NPQN. The interval 421–457 is disordered; the sequence is AKEEANKAMSKKTSEGVTNEKLTASHAVEEEKPEGHV. Ser-445 bears the Phosphoserine mark. The segment covering 447-457 has biased composition (basic and acidic residues); the sequence is AVEEEKPEGHV.

Part of a heteromultimeric cytoplasmic complex with HSP90AA1, HSPA1A/HSPA1B and steroid receptors. Upon ligand binding dissociates from the complex and FKBP4 takes its place. Interacts with functionally mature heterooligomeric progesterone receptor complexes along with HSP90 and TEBP. Interacts with NR3C1. Interacts with Akt/AKT1 and PHLPP1; enhancing dephosphorylation and subsequent activation of Akt/AKT1. Interacts with IFI44L; this interaction modulates the kinase activity of IKBKB and IKBKE. Interacts with IKBKB and IKBKE. Post-translationally, acetylation impairs ability to promote interaction between Akt/AKT1 and PHLPP1. Deacetylation by SIRT7 promotes interaction between Akt/AKT1 and PHLPP1, leading to suppress Akt/AKT1 activation. Ubiquitinated, leading to degradation in a proteasome-dependent manner. Deubiquitinated by USP49, leading to stabilization.

The protein localises to the cytoplasm. It is found in the nucleus. It carries out the reaction [protein]-peptidylproline (omega=180) = [protein]-peptidylproline (omega=0). With respect to regulation, inhibited by both FK506 and rapamycin. Immunophilin protein with PPIase and co-chaperone activities. Component of unligated steroid receptors heterocomplexes through interaction with heat-shock protein 90 (HSP90). Plays a role in the intracellular trafficking of heterooligomeric forms of steroid hormone receptors maintaining the complex into the cytoplasm when unliganded. Acts as a regulator of Akt/AKT1 activity by promoting the interaction between Akt/AKT1 and PHLPP1, thereby enhancing dephosphorylation and subsequent activation of Akt/AKT1. Interacts with IKBKE and IKBKB which facilitates IKK complex assembly leading to increased IKBKE and IKBKB kinase activity, NF-kappaB activation, and IFN production. The chain is Peptidyl-prolyl cis-trans isomerase FKBP5 (FKBP5) from Saimiri boliviensis boliviensis (Bolivian squirrel monkey).